A 478-amino-acid chain; its full sequence is ATP-dependent RNA helicase DDX19A (478 aa).

Ala-2 carries the post-translational modification N-acetylalanine. An N-terminal lobe region spans residues 2–299; the sequence is ATDSWALAVD…DPNIIKLKRE (298 aa). A Glycyl lysine isopeptide (Lys-Gly) (interchain with G-Cter in SUMO1); alternate cross-link involves residue Lys-26. Lys-26 participates in a covalent cross-link: Glycyl lysine isopeptide (Lys-Gly) (interchain with G-Cter in SUMO2); alternate. Positions 31-55 are disordered; that stretch reads KPDTNGVIKTNATPEKTDEEEKEDR. Positions 54-67 are N-terminal helix; that stretch reads DRAAQSLLNKLIRS. A Q motif motif is present at residues 91–119; that stretch reads KSFEELRLKPQLLQGVYAMGFNRPSKIQE. ATP-binding positions include Gln-118 and 137–144; that span reads SQSGTGKT. The 171-residue stretch at 124 to 294 folds into the Helicase ATP-binding domain; it reads MMLAEPPQNL…QKVVPDPNII (171 aa). Residues 241–244 carry the DEAD box motif; it reads DEAD. The C-terminal lobe stretch occupies residues 300 to 478; sequence EETLDTIKQY…DLDEIEKIAN (179 aa). The Helicase C-terminal domain maps to 305–473; that stretch reads TIKQYYVLCN…RLDTDDLDEI (169 aa). Residues Arg-428 and Arg-431 each coordinate ATP.

Belongs to the DEAD box helicase family. DDX19/DBP5 subfamily.

The protein resides in the cytoplasm. It is found in the nucleus. It localises to the nucleoplasm. It carries out the reaction ATP + H2O = ADP + phosphate + H(+). Functionally, ATP-dependent RNA helicase involved in mRNA export from the nucleus. Rather than unwinding RNA duplexes, DDX19 functions as a remodeler of ribonucleoprotein particles, whereby proteins bound to nuclear mRNA are dissociated and replaced by cytoplasmic mRNA binding proteins. In Bos taurus (Bovine), this protein is ATP-dependent RNA helicase DDX19A (DDX19A).